A 541-amino-acid chain; its full sequence is Chaperonin GroEL (541 aa).

ATP is bound by residues 29 to 32 (TLGP), 86 to 90 (DGTTT), glycine 413, 480 to 482 (NAA), and aspartate 496.

Belongs to the chaperonin (HSP60) family. In terms of assembly, forms a cylinder of 14 subunits composed of two heptameric rings stacked back-to-back. Interacts with the co-chaperonin GroES.

It is found in the cytoplasm. It carries out the reaction ATP + H2O + a folded polypeptide = ADP + phosphate + an unfolded polypeptide.. Together with its co-chaperonin GroES, plays an essential role in assisting protein folding. The GroEL-GroES system forms a nano-cage that allows encapsulation of the non-native substrate proteins and provides a physical environment optimized to promote and accelerate protein folding. This is Chaperonin GroEL from Gardnerella vaginalis.